The sequence spans 1062 residues: Carbamoyl phosphate synthase large chain (1062 aa).

The interval 1–401 (MPKRTDIHKI…AMQKAVQSLE (401 aa)) is carboxyphosphate synthetic domain. ATP-binding residues include R129, R169, G175, G176, K208, I210, E215, G241, I242, H243, Q284, and E298. The ATP-grasp 1 domain maps to 133–327 (KELCQKLGEP…IAKMAAKIAI (195 aa)). Positions 284, 298, and 300 each coordinate Mg(2+). Residues Q284, E298, and N300 each contribute to the Mn(2+) site. Residues 402-546 (IDEKDLYSAK…YSTYDGENES (145 aa)) form an oligomerization domain region. A carbamoyl phosphate synthetic domain region spans residues 547–929 (RKSGKKSVIV…ALYKAFAGAK (383 aa)). The ATP-grasp 2 domain occupies 671–861 (DQIIKSLHLH…MAQVATRVIM (191 aa)). Residues R707, D746, L748, E752, G777, V778, H779, S780, Q820, and E832 each contribute to the ATP site. Positions 820, 832, and 834 each coordinate Mg(2+). Mn(2+) contacts are provided by Q820, E832, and N834. Positions 930–1062 (MQLPENGNVL…NRSFATDALK (133 aa)) constitute an MGS-like domain. The segment at 930-1062 (MQLPENGNVL…NRSFATDALK (133 aa)) is allosteric domain.

Belongs to the CarB family. As to quaternary structure, composed of two chains; the small (or glutamine) chain promotes the hydrolysis of glutamine to ammonia, which is used by the large (or ammonia) chain to synthesize carbamoyl phosphate. Tetramer of heterodimers (alpha,beta)4. Mg(2+) is required as a cofactor. Requires Mn(2+) as cofactor.

The catalysed reaction is hydrogencarbonate + L-glutamine + 2 ATP + H2O = carbamoyl phosphate + L-glutamate + 2 ADP + phosphate + 2 H(+). It catalyses the reaction hydrogencarbonate + NH4(+) + 2 ATP = carbamoyl phosphate + 2 ADP + phosphate + 2 H(+). It functions in the pathway amino-acid biosynthesis; L-arginine biosynthesis; carbamoyl phosphate from bicarbonate: step 1/1. The protein operates within pyrimidine metabolism; UMP biosynthesis via de novo pathway; (S)-dihydroorotate from bicarbonate: step 1/3. Its function is as follows. Large subunit of the glutamine-dependent carbamoyl phosphate synthetase (CPSase). CPSase catalyzes the formation of carbamoyl phosphate from the ammonia moiety of glutamine, carbonate, and phosphate donated by ATP, constituting the first step of 2 biosynthetic pathways, one leading to arginine and/or urea and the other to pyrimidine nucleotides. The large subunit (synthetase) binds the substrates ammonia (free or transferred from glutamine from the small subunit), hydrogencarbonate and ATP and carries out an ATP-coupled ligase reaction, activating hydrogencarbonate by forming carboxy phosphate which reacts with ammonia to form carbamoyl phosphate. In Lactobacillus delbrueckii subsp. bulgaricus (strain ATCC BAA-365 / Lb-18), this protein is Carbamoyl phosphate synthase large chain.